The sequence spans 102 residues: Flagellar hook-basal body complex protein FliE (102 aa).

It belongs to the FliE family.

Its subcellular location is the bacterial flagellum basal body. This Oceanobacillus iheyensis (strain DSM 14371 / CIP 107618 / JCM 11309 / KCTC 3954 / HTE831) protein is Flagellar hook-basal body complex protein FliE.